Consider the following 498-residue polypeptide: MDAKLLLPFPFAPAAATRSPKSLFLGAPLPPPPRPPPFPLRLRPRPAAVVAQAAVKRRKEAPFDTVIQRDKKLKLVLKLRNILVAQPDRVMSLRELGRFRRDLGLTRKRRLIALLRRFPGVFDVVEEGVYSLRFRLTPAAERLYLDELRLRNESEGLAVAKLRKLLMMSQEKRILIEKVAHLKHDLGLPPEFRDTVCLRYPQYFRVVRMDRGPALELTHWDPELAVSAAELAEEESRAREAEERNLIIDRPLKFNRVRLPKGLKLTRGEARRIARFKEMPYISPYADFSHLRSGSDEKEKHACGVVHEILSLTVEKRTLVDHLTHFREEFRFSQSLRGMIIRHPDMFYVSFKGDRDSVFLREAYKDSQLVEKNQLVLLKEKMRALVAVPRFPRRAAVGTGEEAEGMNGSLQSRDQVSDEEYDDEDEGLSDMEDLISELSGGKSDADYEWGDGWFGENDDSPPDFGDDEVKVAMKIADGSANGSAPVPVFPDGRPRERW.

Residues 1-50 (MDAKLLLPFPFAPAAATRSPKSLFLGAPLPPPPRPPPFPLRLRPRPAAVV) constitute a chloroplast transit peptide. A PORR domain is found at 59–387 (KEAPFDTVIQ…LKEKMRALVA (329 aa)). Disordered regions lie at residues 397-427 (VGTGEEAEGMNGSLQSRDQVSDEEYDDEDEG) and 446-498 (DYEW…RERW). Composition is skewed to acidic residues over residues 417 to 427 (SDEEYDDEDEG) and 456 to 466 (ENDDSPPDFGD).

It is found in the plastid. It localises to the chloroplast. RNA-binding protein involved in the chloroplastic group II intron splicing. Binds specific group II introns and promotes their splicing. Functions in the context of a heterodimer with the ribonuclease III domain-containing protein RNC1. The sequence is that of Protein WHAT'S THIS FACTOR 1, chloroplastic from Zea mays (Maize).